The sequence spans 1069 residues: Rab GTPase-activating protein 1 (1069 aa).

The disordered stretch occupies residues methionine 1 to glutamate 79. Residues valine 7 to serine 22 show a composition bias toward low complexity. At serine 42 the chain carries Phosphoserine. The PID domain maps to glutamate 142–isoleucine 298. Position 360 is a phosphoserine (serine 360). The segment at glutamate 482–glycine 527 is disordered. Over residues threonine 489–isoleucine 506 the composition is skewed to polar residues. The segment covering proline 510 to glutamate 520 has biased composition (acidic residues). One can recognise a Rab-GAP TBC domain in the interval glycine 566–glycine 752. A coiled-coil region spans residues lysine 798–lysine 1047. A Phosphothreonine modification is found at threonine 996.

Interacts with RAB6A and tubulin gamma.

The protein resides in the cytoplasm. The protein localises to the cytosol. It localises to the cytoskeleton. It is found in the microtubule organizing center. Its subcellular location is the centrosome. May act as a GTPase-activating protein of RAB6A. May play a role in microtubule nucleation by centrosome. May participate in a RAB6A-mediated pathway involved in the metaphase-anaphase transition. The chain is Rab GTPase-activating protein 1 (RABGAP1) from Homo sapiens (Human).